The sequence spans 407 residues: 3-oxoacyl-[acyl-carrier-protein] synthase 1 (407 aa).

The Ketosynthase family 3 (KS3) domain maps to 1–405 (MKRVVITGLG…GTNVSLIIKK (405 aa)). Active-site for beta-ketoacyl synthase activity residues include C164, H299, and H335.

The protein belongs to the thiolase-like superfamily. Beta-ketoacyl-ACP synthases family. As to quaternary structure, homodimer.

It localises to the cytoplasm. It carries out the reaction a fatty acyl-[ACP] + malonyl-[ACP] + H(+) = a 3-oxoacyl-[ACP] + holo-[ACP] + CO2. The catalysed reaction is (3Z)-decenoyl-[ACP] + malonyl-[ACP] + H(+) = 3-oxo-(5Z)-dodecenoyl-[ACP] + holo-[ACP] + CO2. The protein operates within lipid metabolism; fatty acid biosynthesis. In terms of biological role, involved in the type II fatty acid elongation cycle. Catalyzes the elongation of a wide range of acyl-ACP by the addition of two carbons from malonyl-ACP to an acyl acceptor. Can also use unsaturated fatty acids. Catalyzes a key reaction in unsaturated fatty acid (UFA) synthesis, the elongation of the cis-3-decenoyl-ACP produced by FabA. The polypeptide is 3-oxoacyl-[acyl-carrier-protein] synthase 1 (fabB) (Buchnera aphidicola subsp. Baizongia pistaciae (strain Bp)).